The primary structure comprises 228 residues: Urease accessory protein UreF (228 aa).

It belongs to the UreF family. As to quaternary structure, ureD, UreF and UreG form a complex that acts as a GTP-hydrolysis-dependent molecular chaperone, activating the urease apoprotein by helping to assemble the nickel containing metallocenter of UreC. The UreE protein probably delivers the nickel.

It is found in the cytoplasm. Its function is as follows. Required for maturation of urease via the functional incorporation of the urease nickel metallocenter. The polypeptide is Urease accessory protein UreF (Yersinia pestis bv. Antiqua (strain Antiqua)).